The chain runs to 657 residues: Threonine--tRNA ligase (657 aa).

A TGS domain is found at 7–70 (DRQQVIITLP…TENARVSIIT (64 aa)). Positions 253 to 555 (DHRKLGAELG…LIEHTAGNFP (303 aa)) are catalytic. Zn(2+) is bound by residues cysteine 351, histidine 402, and histidine 532.

It belongs to the class-II aminoacyl-tRNA synthetase family. Homodimer. Requires Zn(2+) as cofactor.

Its subcellular location is the cytoplasm. The enzyme catalyses tRNA(Thr) + L-threonine + ATP = L-threonyl-tRNA(Thr) + AMP + diphosphate + H(+). Catalyzes the attachment of threonine to tRNA(Thr) in a two-step reaction: L-threonine is first activated by ATP to form Thr-AMP and then transferred to the acceptor end of tRNA(Thr). Also edits incorrectly charged L-seryl-tRNA(Thr). The sequence is that of Threonine--tRNA ligase from Chlorobaculum tepidum (strain ATCC 49652 / DSM 12025 / NBRC 103806 / TLS) (Chlorobium tepidum).